Here is a 244-residue protein sequence, read N- to C-terminus: tRNA (guanine-N(1)-)-methyltransferase (244 aa).

S-adenosyl-L-methionine contacts are provided by residues G113 and 133–138; that span reads IGDYVL.

It belongs to the RNA methyltransferase TrmD family. In terms of assembly, homodimer.

Its subcellular location is the cytoplasm. The catalysed reaction is guanosine(37) in tRNA + S-adenosyl-L-methionine = N(1)-methylguanosine(37) in tRNA + S-adenosyl-L-homocysteine + H(+). Its function is as follows. Specifically methylates guanosine-37 in various tRNAs. This Bacillus cereus (strain G9842) protein is tRNA (guanine-N(1)-)-methyltransferase.